The sequence spans 512 residues: Secreted triacylglycerol lipase LIP5 (512 aa).

Residues 1 to 17 form the signal peptide; that stretch reads MMYASLVHWLALAVALA. A disulfide bridge links C118 with C292. S203 (nucleophile) is an active-site residue. Residue N316 is glycosylated (N-linked (GlcNAc...) asparagine). D352 is a catalytic residue. N361 is a glycosylation site (N-linked (GlcNAc...) asparagine). Residue H386 is part of the active site. The N-linked (GlcNAc...) asparagine glycan is linked to N453. The disordered stretch occupies residues 480-512; that stretch reads KGDISPGEGGDHTKESKKAAAKFKAEKKHGKHH. The span at 488–497 shows a compositional bias: basic and acidic residues; it reads GGDHTKESKK. Positions 498–512 are enriched in basic residues; it reads AAAKFKAEKKHGKHH.

It belongs to the AB hydrolase superfamily. Lipase family. Class Lip subfamily.

Its subcellular location is the secreted. The enzyme catalyses a triacylglycerol + H2O = a diacylglycerol + a fatty acid + H(+). It carries out the reaction a monoacylglycerol + H2O = glycerol + a fatty acid + H(+). The catalysed reaction is a diacylglycerol + H2O = a monoacylglycerol + a fatty acid + H(+). Functionally, secreted lipase that hydrolyzes acylglycerol lipids such as triacylglycerols and consequently releases free fatty acid. Can hydrolyze 4-nitrophenyl palmitate to release 4-nitrophenol and palmitoic acid. Due to an absence of fatty acid synthase genes in Malassezia species, secretory lipases are essential for the yeast to generate free fatty acids from degradation of sebum and assimilate them as lipid sources for growth. Plays an essential role at the pathogen-host interface during disease progression. This chain is Secreted triacylglycerol lipase LIP5, found in Malassezia restricta (strain ATCC 96810 / NBRC 103918 / CBS 7877) (Seborrheic dermatitis infection agent).